Consider the following 157-residue polypeptide: Transcriptional repressor NrdR (157 aa).

Residues 3-34 (CPFCGHMESQVKDSRPSEDGAAIRRRRLCPEC) fold into a zinc finger. The 91-residue stretch at 49 to 139 (LTIVKRSGRR…VYRDFRETSD (91 aa)) folds into the ATP-cone domain.

This sequence belongs to the NrdR family. It depends on Zn(2+) as a cofactor.

Its function is as follows. Negatively regulates transcription of bacterial ribonucleotide reductase nrd genes and operons by binding to NrdR-boxes. The protein is Transcriptional repressor NrdR of Caulobacter sp. (strain K31).